A 168-amino-acid polypeptide reads, in one-letter code: Photosystem I assembly protein Ycf3 (168 aa).

TPR repeat units follow at residues 35 to 68 (AFTY…EIDP), 72 to 105 (SYIL…NPFL), and 120 to 153 (GEQA…TPGN).

This sequence belongs to the Ycf3 family.

Its subcellular location is the plastid. The protein localises to the chloroplast thylakoid membrane. Its function is as follows. Essential for the assembly of the photosystem I (PSI) complex. May act as a chaperone-like factor to guide the assembly of the PSI subunits. The sequence is that of Photosystem I assembly protein Ycf3 from Acorus calamus var. americanus (American sweet flag).